The primary structure comprises 272 residues: Insulin-like growth factor-binding protein 1 (272 aa).

An N-terminal signal peptide occupies residues 1–25 (MPEVPAAGLWPFLLLLAVQVSTVAS). Residues 28 to 109 (QPWHCAPCSA…TRGQGACVPE (82 aa)) form the IGFBP N-terminal domain. Intrachain disulfides connect Cys32–Cys59, Cys35–Cys61, Cys43–Cys62, Cys50–Cys65, and Cys73–Cys86. 3 positions are modified to phosphoserine: Ser139, Ser157, and Ser169. Thr170 carries the post-translational modification Phosphothreonine. Tyr171 bears the Phosphotyrosine mark. The region spanning 186 to 264 (KQPCRRELYK…SLEIRGDPNC (79 aa)) is the Thyroglobulin type-1 domain. Cystine bridges form between Cys189–Cys219, Cys230–Cys241, and Cys243–Cys264. Residue Ser255 is modified to Phosphoserine. The short motif at 259–261 (RGD) is the Cell attachment site element.

Binds equally well IGF1 and IGF2. Interacts with integrin ITGA5:ITGB1. Interacts with VHL; this interaction inhibits HIF1A degradation.

It localises to the secreted. Functionally, multifunctional protein that plays a critical role in regulating the availability of IGFs such as IGF1 and IGF2 to their receptors and thereby regulates IGF-mediated cellular processes including cell migration, proliferation, differentiation or apoptosis in a cell-type specific manner. Also plays a positive role in cell migration by interacting with integrin ITGA5:ITGB1 through its RGD motif. Mechanistically, binding to integrins leads to activation of focal adhesion kinase/PTK2 and stimulation of the mitogen-activated protein kinase (MAPK) pathway. Regulates cardiomyocyte apoptosis by suppressing HIF-1alpha/HIF1A degradation through ubiquitination. This is Insulin-like growth factor-binding protein 1 (IGFBP1) from Ictidomys tridecemlineatus (Thirteen-lined ground squirrel).